A 323-amino-acid chain; its full sequence is Ubiquinone biosynthesis protein COQ4, mitochondrial (323 aa).

A mitochondrion-targeting transit peptide spans 1–29; the sequence is MLKSTVSNTRIKCCRIDQRRNYLFTALAS. Zn(2+) contacts are provided by His-205, Asp-206, His-209, and Glu-221.

Belongs to the COQ4 family. Component of a multi-subunit COQ enzyme complex, composed of at least COQ3, COQ4, COQ5, COQ6, COQ7 and COQ9. Zn(2+) is required as a cofactor.

Its subcellular location is the mitochondrion inner membrane. The catalysed reaction is a 4-hydroxy-3-methoxy-5-(all-trans-polyprenyl)benzoate + H(+) = a 2-methoxy-6-(all-trans-polyprenyl)phenol + CO2. It functions in the pathway cofactor biosynthesis; ubiquinone biosynthesis. Functionally, lyase that catalyzes the C1-decarboxylation of 4-hydroxy-3-methoxy-5-(all-trans-polyprenyl)benzoic acid into 2-methoxy-6-(all-trans-polyprenyl)phenol during ubiquinone biosynthesis. The polypeptide is Ubiquinone biosynthesis protein COQ4, mitochondrial (Candida dubliniensis (strain CD36 / ATCC MYA-646 / CBS 7987 / NCPF 3949 / NRRL Y-17841) (Yeast)).